The sequence spans 346 residues: Serpentine receptor class gamma-20 (346 aa).

The next 7 membrane-spanning stretches (helical) occupy residues 27–47 (VMLS…SAVL), 69–89 (FFVL…IEVL), 106–128 (PFFF…CLAF), 157–177 (ILAP…WNIL), 212–232 (IPCL…LTML), 254–274 (TMLF…LPGI), and 279–299 (LLIS…ALIL).

The protein belongs to the nematode receptor-like protein srg family.

The protein resides in the membrane. The sequence is that of Serpentine receptor class gamma-20 (srg-20) from Caenorhabditis elegans.